Reading from the N-terminus, the 255-residue chain is Geranylgeranylglyceryl phosphate synthase (255 aa).

The Mg(2+) site is built by D34 and T64. Residues Y182–G188, G213–G214, and G235–N236 contribute to the sn-glycerol 1-phosphate site.

The protein belongs to the GGGP/HepGP synthase family. Group II subfamily. Mg(2+) serves as cofactor.

It is found in the cytoplasm. It carries out the reaction sn-glycerol 1-phosphate + (2E,6E,10E)-geranylgeranyl diphosphate = sn-3-O-(geranylgeranyl)glycerol 1-phosphate + diphosphate. It functions in the pathway membrane lipid metabolism; glycerophospholipid metabolism. In terms of biological role, prenyltransferase that catalyzes the transfer of the geranylgeranyl moiety of geranylgeranyl diphosphate (GGPP) to the C3 hydroxyl of sn-glycerol-1-phosphate (G1P). This reaction is the first ether-bond-formation step in the biosynthesis of archaeal membrane lipids. The sequence is that of Geranylgeranylglyceryl phosphate synthase from Saccharolobus islandicus (strain M.14.25 / Kamchatka #1) (Sulfolobus islandicus).